We begin with the raw amino-acid sequence, 931 residues long: Elicitor of plant defense protein 1 (931 aa).

The segment at 13-32 is disordered; sequence NYNSVIPPPEPLNTDPDMHP. Residues 19–277 form the uDENN domain; that stretch reads PPPEPLNTDP…NLCTEAFNPL (259 aa). Residues 301–433 enclose the cDENN domain; that stretch reads EIPGSRSIDL…ARRKLMSLLQ (133 aa). One can recognise a dDENN domain in the interval 435–799; it reads AAPHKLRYGV…DREMQPANNA (365 aa). Disordered stretches follow at residues 478–552 and 566–586; these read LGKW…SRSD and SGHF…DKHP. Residues 521-537 show a composition bias toward polar residues; that stretch reads TSKSGKTSPQSSVSPVS. The span at 566–575 shows a compositional bias: basic and acidic residues; it reads SGHFGEEKMR. The Phorbol-ester/DAG-type zinc-finger motif lies at 666–714; that stretch reads GHCFNWIPKDNTSICNICNDHAEGDGIYKCTGCKIFSHGRCLGHASLVC.

It belongs to the EPD1 elicitor family.

It is found in the secreted. It localises to the host cell. Functionally, acts as an elicitor that triggers cell death and defense responses in the host plants. The sequence is that of Elicitor of plant defense protein 1 from Fusarium odoratissimum (strain NRRL 54006).